A 134-amino-acid polypeptide reads, in one-letter code: Protein NrdI (134 aa).

It belongs to the NrdI family.

Functionally, probably involved in ribonucleotide reductase function. In Rhizobium etli (strain CIAT 652), this protein is Protein NrdI.